The chain runs to 1132 residues: Tyrosine-protein kinase JAK2 (1132 aa).

Residues methionine 1–glutamine 239 form an interaction with cytokine/interferon/growth hormone receptors region. The region spanning proline 37–histidine 380 is the FERM domain. Tyrosine 119 is subject to Phosphotyrosine; by autocatalysis. Tyrosine 372 and tyrosine 373 each carry phosphotyrosine. One can recognise an SH2; atypical domain in the interval histidine 401–glutamine 482. The residue at position 523 (serine 523) is a Phosphoserine. The region spanning leucine 545–phenylalanine 809 is the Protein kinase 1 domain. Phosphotyrosine occurs at positions 570 and 813. Residues leucine 849–aspartate 1124 enclose the Protein kinase 2 domain. Leucine 855–valine 863 contacts ATP. Residue tyrosine 868 is modified to Phosphotyrosine; by autocatalysis. ATP is bound at residue lysine 882. Residues tyrosine 966 and tyrosine 972 each carry the phosphotyrosine; by autocatalysis modification. The Proton acceptor role is filled by aspartate 976. Residues tyrosine 1007 and tyrosine 1008 each carry the phosphotyrosine; by autocatalysis modification.

It belongs to the protein kinase superfamily. Tyr protein kinase family. JAK subfamily. Interacts with IL23R, SKB1 and STAM2. Interacts with EPOR. Interacts with LYN. Interacts with SIRPA. Interacts with SH2B1. Interacts with TEC. Interacts with IFNGR2 (via intracellular domain). Interacts with LEPR (Isoform B). Interacts with HSP90AB1; promotes functional activation in a heat shock-dependent manner. Interacts with STRA6. Interacts with ASB2; the interaction targets JAK2 for Notch-induced proteasomal degradation. Interacts with MPL/TPOR. Mg(2+) serves as cofactor. Autophosphorylated, leading to regulate its activity. Leptin promotes phosphorylation on tyrosine residues, including phosphorylation on Tyr-813. Autophosphorylation on Tyr-119 in response to EPO down-regulates its kinase activity. Autophosphorylation on Tyr-868, Tyr-966 and Tyr-972 in response to growth hormone (GH) are required for maximal kinase activity. Also phosphorylated by TEC. Phosphorylated on tyrosine residues in response to interferon gamma signaling. Phosphorylated on tyrosine residues in response to a signaling cascade that is activated by increased cellular retinol. Post-translationally, undergoes Notch-induced ubiquitination and subsequent proteasomal degradation which is mediated by ASB1 or ASB2, the substrate-recognition components of probable ECS E3 ubiquitin-protein ligase complexes. As to expression, ubiquitously expressed throughout most tissues.

It is found in the endomembrane system. The protein resides in the cytoplasm. Its subcellular location is the nucleus. It catalyses the reaction L-tyrosyl-[protein] + ATP = O-phospho-L-tyrosyl-[protein] + ADP + H(+). With respect to regulation, regulated by autophosphorylation, can both activate or decrease activity. Heme regulates its activity by enhancing the phosphorylation on Tyr-1007 and Tyr-1008. Non-receptor tyrosine kinase involved in various processes such as cell growth, development, differentiation or histone modifications. Mediates essential signaling events in both innate and adaptive immunity. In the cytoplasm, plays a pivotal role in signal transduction via its association with type I receptors such as growth hormone (GHR), prolactin (PRLR), leptin (LEPR), erythropoietin (EPOR), thrombopoietin receptor (MPL/TPOR); or type II receptors including IFN-alpha, IFN-beta, IFN-gamma and multiple interleukins. Following ligand-binding to cell surface receptors, phosphorylates specific tyrosine residues on the cytoplasmic tails of the receptor, creating docking sites for STATs proteins. Subsequently, phosphorylates the STATs proteins once they are recruited to the receptor. Phosphorylated STATs then form homodimer or heterodimers and translocate to the nucleus to activate gene transcription. For example, cell stimulation with erythropoietin (EPO) during erythropoiesis leads to JAK2 autophosphorylation, activation, and its association with erythropoietin receptor (EPOR) that becomes phosphorylated in its cytoplasmic domain. Then, STAT5 (STAT5A or STAT5B) is recruited, phosphorylated and activated by JAK2. Once activated, dimerized STAT5 translocates into the nucleus and promotes the transcription of several essential genes involved in the modulation of erythropoiesis. Part of a signaling cascade that is activated by increased cellular retinol and that leads to the activation of STAT5 (STAT5A or STAT5B). In addition, JAK2 mediates angiotensin-2-induced ARHGEF1 phosphorylation. Plays a role in cell cycle by phosphorylating CDKN1B. Cooperates with TEC through reciprocal phosphorylation to mediate cytokine-driven activation of FOS transcription. In the nucleus, plays a key role in chromatin by specifically mediating phosphorylation of 'Tyr-41' of histone H3 (H3Y41ph), a specific tag that promotes exclusion of CBX5 (HP1 alpha) from chromatin. Up-regulates the potassium voltage-gated channel activity of KCNA3. This Mus musculus (Mouse) protein is Tyrosine-protein kinase JAK2.